Reading from the N-terminus, the 504-residue chain is Procardosin-A (504 aa).

An N-terminal signal peptide occupies residues 1 to 24; sequence MGTSIKANVLALFLFYLLSPTVFS. A propeptide spanning residues 25 to 68 is cleaved from the precursor; it reads VSDDGLIRIGLKKRKVDRIDQLRGRRALMEGNARKDFGFRGTVR. Positions 85–501 constitute a Peptidase A1 domain; it reads YFGEIGIGTP…DYGNLLVGFA (417 aa). Residue Asp-103 is part of the active site. Cys-116 and Cys-122 are oxidised to a cystine. N-linked (GlcNAc...) asparagine glycosylation is present at Asn-139. Positions 246–248 match the RGD motif motif; the sequence is RGD. Cys-277 and Cys-281 are oxidised to a cystine. Residue Asp-286 is part of the active site. Residues 310–414 constitute a propeptide, plant-specific insert; that stretch reads GVMNQQCKTV…YANELCEHLS (105 aa). The Saposin B-type domain occupies 311-416; the sequence is VMNQQCKTVV…NELCEHLSTS (106 aa). Disulfide bonds link Cys-316-Cys-410, Cys-341-Cys-382, Cys-347-Cys-379, and Cys-424-Cys-461. N-linked (GlcNAc...) asparagine glycosylation is present at Asn-432. The short motif at 455 to 457 is the KGE motif element; it reads KGE.

The protein belongs to the peptidase A1 family. As to quaternary structure, heterodimer of a light chain and a heavy chain. An intermediate form (35 kDa and 30 kDa subunits) is produced first, and undergoes proteolytic processing to remove the internal plant-specific insert (PSI) and the propeptide. There is some heterogeniety at the cleavage site. Interacts (via RGD or KGE motifs) with PLD1 (via C2 domain). In terms of processing, N-glycosylated. Glycans found at Asn-139 include approximately 6% oligomannose, 82% oligosaccharides of the plant modified type with proximal fucose but without xylose and 6% oligosaccharides of the plant modified type with proximal fucose and xylose. Glycans found at Asn-432 include 14% oligosaccharides of the plant modified type with proximal fucose but without xylose and 86% oligosaccharides of the plant modified type with proximal fucose and xylose. In terms of tissue distribution, detected only in pistils, not in seeds, roots, midribs, bracts, stamens, pollen, vascular or supporting tissues. Detected in seeds. High amounts are detected in the broad outer region of the upper portion of the stigma, towards the lower portion of the stigma it accumulates at the periphery. Within the stigma, expressed mainly in the epidermic papillae, lower levels are found in the cortical parenchyma. Present mainly in epidermal cells within the stye (at protein level). Expressed in young flower buds, and at lower levels in seeds, pollen and bracteas, but not in roots or leaves.

The protein resides in the microsome membrane. It localises to the protein storage vacuole. Its subcellular location is the secreted. The protein localises to the cell wall. It is found in the extracellular space. The protein resides in the extracellular matrix. Inhibited by the specific aspartic proteinase inhibitors diazoacetyl-noleucine methyl ester and pepstatin. Functionally, aspartic proteinase with a high preference for bonds between hydrophobic residues. Cleaves alpha-lactalbumin but not beta-lactoglobulin. This is Procardosin-A from Cynara cardunculus (Cardoon).